Here is a 496-residue protein sequence, read N- to C-terminus: Glutamate--tRNA ligase (496 aa).

Residues 12 to 22 (PSPTGHLHIGN) carry the 'HIGH' region motif. A 'KMSKS' region motif is present at residues 259 to 263 (KLSKR). Lys262 contributes to the ATP binding site.

The protein belongs to the class-I aminoacyl-tRNA synthetase family. Glutamate--tRNA ligase type 1 subfamily. Monomer.

It localises to the cytoplasm. It catalyses the reaction tRNA(Glu) + L-glutamate + ATP = L-glutamyl-tRNA(Glu) + AMP + diphosphate. Its function is as follows. Catalyzes the attachment of glutamate to tRNA(Glu) in a two-step reaction: glutamate is first activated by ATP to form Glu-AMP and then transferred to the acceptor end of tRNA(Glu). This chain is Glutamate--tRNA ligase, found in Lactiplantibacillus plantarum (strain ATCC BAA-793 / NCIMB 8826 / WCFS1) (Lactobacillus plantarum).